A 117-amino-acid chain; its full sequence is Large ribosomal subunit protein bL20 (117 aa).

It belongs to the bacterial ribosomal protein bL20 family.

Functionally, binds directly to 23S ribosomal RNA and is necessary for the in vitro assembly process of the 50S ribosomal subunit. It is not involved in the protein synthesizing functions of that subunit. This chain is Large ribosomal subunit protein bL20, found in Wigglesworthia glossinidia brevipalpis.